Consider the following 376-residue polypeptide: Lipid-A-disaccharide synthase (376 aa).

Belongs to the LpxB family.

It carries out the reaction a lipid X + a UDP-2-N,3-O-bis[(3R)-3-hydroxyacyl]-alpha-D-glucosamine = a lipid A disaccharide + UDP + H(+). It participates in bacterial outer membrane biogenesis; LPS lipid A biosynthesis. Functionally, condensation of UDP-2,3-diacylglucosamine and 2,3-diacylglucosamine-1-phosphate to form lipid A disaccharide, a precursor of lipid A, a phosphorylated glycolipid that anchors the lipopolysaccharide to the outer membrane of the cell. In Coxiella burnetii (strain CbuG_Q212) (Coxiella burnetii (strain Q212)), this protein is Lipid-A-disaccharide synthase.